Here is an 817-residue protein sequence, read N- to C-terminus: Leucine--tRNA ligase (817 aa).

The short motif at 51 to 61 (PYPSGDLHVGH) is the 'HIGH' region element. The 'KMSKS' region motif lies at 588–592 (RMSKS). Residue K591 coordinates ATP.

Belongs to the class-I aminoacyl-tRNA synthetase family.

Its subcellular location is the cytoplasm. It catalyses the reaction tRNA(Leu) + L-leucine + ATP = L-leucyl-tRNA(Leu) + AMP + diphosphate. This is Leucine--tRNA ligase from Rubrobacter xylanophilus (strain DSM 9941 / JCM 11954 / NBRC 16129 / PRD-1).